Here is a 1057-residue protein sequence, read N- to C-terminus: Glycine dehydrogenase (decarboxylating), mitochondrial (1057 aa).

The transit peptide at 1 to 86 (MERARRLANR…GVGYPSQSRS (86 aa)) directs the protein to the mitochondrion. Over residues 18–27 (SEAKQNRKTE) the composition is skewed to basic and acidic residues. Residues 18 to 47 (SEAKQNRKTESTSTTTTTPLPFSLSGSSSR) are disordered. The segment covering 28–47 (STSTTTTTPLPFSLSGSSSR) has biased composition (low complexity). Lys-792 is subject to N6-(pyridoxal phosphate)lysine.

Belongs to the GcvP family. Homodimer. The glycine cleavage system is composed of four proteins: P, T, L and H. The cofactor is pyridoxal 5'-phosphate. Highly expressed in leaves. Detected in roots and embryos.

Its subcellular location is the mitochondrion. It carries out the reaction N(6)-[(R)-lipoyl]-L-lysyl-[glycine-cleavage complex H protein] + glycine + H(+) = N(6)-[(R)-S(8)-aminomethyldihydrolipoyl]-L-lysyl-[glycine-cleavage complex H protein] + CO2. In terms of biological role, the glycine cleavage system catalyzes the degradation of glycine. The P protein binds the alpha-amino group of glycine through its pyridoxal phosphate cofactor; CO(2) is released and the remaining methylamine moiety is then transferred to the lipoamide cofactor of the H protein. This is Glycine dehydrogenase (decarboxylating), mitochondrial (GDCSP) from Pisum sativum (Garden pea).